Reading from the N-terminus, the 203-residue chain is A-type ATP synthase subunit E (203 aa).

Belongs to the V-ATPase E subunit family. As to quaternary structure, has multiple subunits with at least A(3), B(3), C, D, E, F, H, I and proteolipid K(x).

The protein resides in the cell membrane. Its function is as follows. Component of the A-type ATP synthase that produces ATP from ADP in the presence of a proton gradient across the membrane. This chain is A-type ATP synthase subunit E, found in Methanococcus maripaludis (strain C7 / ATCC BAA-1331).